Consider the following 337-residue polypeptide: Glyceraldehyde-3-phosphate dehydrogenase, cytosolic (337 aa).

The interval 1 to 151 (MAKVKVGING…YKSDLNIVSN (151 aa)) is binding to NAD. NAD(+) contacts are provided by residues 13–14 (RI), Asp35, and Arg82. A catalytic region spans residues 152–337 (ASCTTNCLAP…DLIMHISKCQ (186 aa)). D-glyceraldehyde 3-phosphate is bound by residues 153–155 (SCT), Thr184, 213–214 (TG), and Arg236. Catalysis depends on Cys154, which acts as the Nucleophile. Asn318 lines the NAD(+) pocket.

This sequence belongs to the glyceraldehyde-3-phosphate dehydrogenase family. In terms of assembly, homotetramer.

It localises to the cytoplasm. The catalysed reaction is D-glyceraldehyde 3-phosphate + phosphate + NAD(+) = (2R)-3-phospho-glyceroyl phosphate + NADH + H(+). Its pathway is carbohydrate degradation; glycolysis; pyruvate from D-glyceraldehyde 3-phosphate: step 1/5. Key enzyme in glycolysis that catalyzes the first step of the pathway by converting D-glyceraldehyde 3-phosphate (G3P) into 3-phospho-D-glyceroyl phosphate. Essential for the maintenance of cellular ATP levels and carbohydrate metabolism. In Mesembryanthemum crystallinum (Common ice plant), this protein is Glyceraldehyde-3-phosphate dehydrogenase, cytosolic (GAPC).